Reading from the N-terminus, the 210-residue chain is Ion-translocating oxidoreductase complex subunit G (210 aa).

A helical transmembrane segment spans residues 9–29 (SLVLALFAIAATALVTITYAL). Residue Thr-176 is modified to FMN phosphoryl threonine.

Belongs to the RnfG family. In terms of assembly, the complex is composed of six subunits: RnfA, RnfB, RnfC, RnfD, RnfE and RnfG. FMN serves as cofactor.

The protein localises to the cell inner membrane. Its function is as follows. Part of a membrane-bound complex that couples electron transfer with translocation of ions across the membrane. The chain is Ion-translocating oxidoreductase complex subunit G from Aliivibrio fischeri (strain MJ11) (Vibrio fischeri).